Reading from the N-terminus, the 459-residue chain is MLKLLIPTIMLFPMIWTLNPKWLWSATTTHSLIIASLSLTLFKCYSTTQWSNLNYMLATDMISTPLIILTCWLLPLMIIASQNHMSTEPINRQRSYITLLVSLQALLIMAFSATEIILFYIMFESTLIPTLIIITRWGNQTERLNAGIYFLFYTLAGSLPLLVALLYLYNTAGSLSFISMNLISIPPNTWTNTFLWVACVTAFLVKMPLYGVHLWLPKAHVEAPVAGSMILAAILLKLGGYGMIRMTIMLEPATKSLAYPFIILALWGIIMTGSICMRQSDMKSLIAYSSVSHMGLVASGILIQTTWGFTGAIILMIAHGLTSSALFCLANTAYERTHSRTLLLARGMQIILPLMATWWFIMSLANMALPPLPNLMGELMILVSMFNWSNWTILLTGTGTLITASYSLYLYMSSQRGPTPNNLTFMELSHTREHLLLTLHIIPIILLMIKPELIWGWCW.

12 helical membrane-spanning segments follow: residues 20 to 42 (PKWLWSATTTHSLIIASLSLTLF), 61 to 81 (MISTPLIILTCWLLPLMIIAS), 103 to 123 (LQALLIMAFSATEIILFYIMF), 148 to 168 (IYFLFYTLAGSLPLLVALLYL), 194 to 214 (FLWVACVTAFLVKMPLYGVHL), 224 to 244 (PVAGSMILAAILLKLGGYGMI), 257 to 277 (LAYPFIILALWGIIMTGSICM), 284 to 303 (SLIAYSSVSHMGLVASGILI), 307 to 329 (WGFTGAIILMIAHGLTSSALFCL), 350 to 370 (IILPLMATWWFIMSLANMALP), 392 to 414 (TILLTGTGTLITASYSLYLYMSS), and 435 to 455 (LLLTLHIIPIILLMIKPELIW).

It belongs to the complex I subunit 4 family.

The protein localises to the mitochondrion membrane. The enzyme catalyses a ubiquinone + NADH + 5 H(+)(in) = a ubiquinol + NAD(+) + 4 H(+)(out). In terms of biological role, core subunit of the mitochondrial membrane respiratory chain NADH dehydrogenase (Complex I) that is believed to belong to the minimal assembly required for catalysis. Complex I functions in the transfer of electrons from NADH to the respiratory chain. The immediate electron acceptor for the enzyme is believed to be ubiquinone. The protein is NADH-ubiquinone oxidoreductase chain 4 (MT-ND4) of Polypterus ornatipinnis (Ornate bichir).